The following is a 467-amino-acid chain: Asparagine--tRNA ligase (467 aa).

This sequence belongs to the class-II aminoacyl-tRNA synthetase family. As to quaternary structure, homodimer.

It localises to the cytoplasm. The enzyme catalyses tRNA(Asn) + L-asparagine + ATP = L-asparaginyl-tRNA(Asn) + AMP + diphosphate + H(+). The protein is Asparagine--tRNA ligase of Haemophilus influenzae (strain PittEE).